A 199-amino-acid chain; its full sequence is Nucleoside triphosphate pyrophosphatase (199 aa).

Catalysis depends on D76, which acts as the Proton acceptor.

Belongs to the Maf family. The cofactor is a divalent metal cation.

The protein resides in the cytoplasm. It carries out the reaction a ribonucleoside 5'-triphosphate + H2O = a ribonucleoside 5'-phosphate + diphosphate + H(+). It catalyses the reaction a 2'-deoxyribonucleoside 5'-triphosphate + H2O = a 2'-deoxyribonucleoside 5'-phosphate + diphosphate + H(+). Functionally, nucleoside triphosphate pyrophosphatase. May have a dual role in cell division arrest and in preventing the incorporation of modified nucleotides into cellular nucleic acids. The sequence is that of Nucleoside triphosphate pyrophosphatase from Caulobacter vibrioides (strain ATCC 19089 / CIP 103742 / CB 15) (Caulobacter crescentus).